A 134-amino-acid chain; its full sequence is UPF0102 protein Adeh_1910 (134 aa).

It belongs to the UPF0102 family.

The polypeptide is UPF0102 protein Adeh_1910 (Anaeromyxobacter dehalogenans (strain 2CP-C)).